A 106-amino-acid chain; its full sequence is Nucleoid-associated protein BRADO0764 (106 aa).

It belongs to the YbaB/EbfC family. As to quaternary structure, homodimer.

The protein localises to the cytoplasm. It is found in the nucleoid. Binds to DNA and alters its conformation. May be involved in regulation of gene expression, nucleoid organization and DNA protection. The polypeptide is Nucleoid-associated protein BRADO0764 (Bradyrhizobium sp. (strain ORS 278)).